The following is a 328-amino-acid chain: ATP synthase mitochondrial F1 complex assembly factor 1 (328 aa).

The transit peptide at Met-1–Glu-57 directs the protein to the mitochondrion.

The protein belongs to the ATP11 family. Interacts with ATP5F1B; involved in the assembly of the F1 component of the mitochondrial ATP synthase (ATPase). Weakly expressed in muscle.

It localises to the mitochondrion inner membrane. In terms of biological role, has a complex stabilizing activity in the assembly of the mitochondrial F1-F0 complex. In Homo sapiens (Human), this protein is ATP synthase mitochondrial F1 complex assembly factor 1.